Consider the following 212-residue polypeptide: MRIAVLKFPGTNGDYDVLRALELAGARGELVWYRDYAAGKYDAVVLAGGFSYGDRLRAGAIAAATKAMDHVREDAERGVPVLGICNGFQILTEAGLLPGALIPNDPPGFISRWVAVRVVDTRTPFTYLYEEGEVVYMPIAHGEGRYVPAGEYKAAFKYVDNPNGSYDNVAGVYEKNVLGLMPHPERAVDPHVSRRGAGGLKLWLGLISWLRR.

The Glutamine amidotransferase type-1 domain occupies 2-212; that stretch reads RIAVLKFPGT…WLGLISWLRR (211 aa). C85 functions as the Nucleophile in the catalytic mechanism. Active-site residues include H183, E185, and H191.

Part of the FGAM synthase complex composed of 1 PurL, 1 PurQ and 2 PurS subunits.

Its subcellular location is the cytoplasm. The enzyme catalyses N(2)-formyl-N(1)-(5-phospho-beta-D-ribosyl)glycinamide + L-glutamine + ATP + H2O = 2-formamido-N(1)-(5-O-phospho-beta-D-ribosyl)acetamidine + L-glutamate + ADP + phosphate + H(+). The catalysed reaction is L-glutamine + H2O = L-glutamate + NH4(+). It participates in purine metabolism; IMP biosynthesis via de novo pathway; 5-amino-1-(5-phospho-D-ribosyl)imidazole from N(2)-formyl-N(1)-(5-phospho-D-ribosyl)glycinamide: step 1/2. Part of the phosphoribosylformylglycinamidine synthase complex involved in the purines biosynthetic pathway. Catalyzes the ATP-dependent conversion of formylglycinamide ribonucleotide (FGAR) and glutamine to yield formylglycinamidine ribonucleotide (FGAM) and glutamate. The FGAM synthase complex is composed of three subunits. PurQ produces an ammonia molecule by converting glutamine to glutamate. PurL transfers the ammonia molecule to FGAR to form FGAM in an ATP-dependent manner. PurS interacts with PurQ and PurL and is thought to assist in the transfer of the ammonia molecule from PurQ to PurL. The sequence is that of Phosphoribosylformylglycinamidine synthase subunit PurQ from Pyrobaculum aerophilum (strain ATCC 51768 / DSM 7523 / JCM 9630 / CIP 104966 / NBRC 100827 / IM2).